Consider the following 327-residue polypeptide: Guanine nucleotide-binding protein subunit beta-like protein 1 (327 aa).

WD repeat units follow at residues 16–54 (LRGTQSPVHALHFCEGAQAQGRPLLFSGSQSGLVHIWSL), 58–97 (RAVTTLDGHGGQCVTWLQTLPQGRQLLSQGRDLKLCLWDL), 103–145 (AVVD…ILEM), 153–195 (ALKP…LWDV), 200–237 (VCSRIACHEEPVMDLDFDSQKARGISGSAGKALAVWSL), 242–282 (ALQV…VFHW), and 286–323 (QPLAVLAFHSAAVQCVAFTADGLLAAGSKDQRISLWSL).

As to expression, ubiquitous. Highly expressed in heart, liver, skeletal muscle, kidney, spleen, thymus and pancreas. Detected at low levels in lung, placenta and brain.

It localises to the cytoplasm. The protein localises to the nucleus. In terms of biological role, acts as a critical regulator of DNA damage response (DDR) signaling via specifically regulating phosphatidylinositol 3-kinase-related protein kinase (PIKK) family proteins. The protein is Guanine nucleotide-binding protein subunit beta-like protein 1 of Homo sapiens (Human).